The sequence spans 449 residues: Kynurenine 3-monooxygenase (449 aa).

The protein belongs to the aromatic-ring hydroxylase family. KMO subfamily. FAD serves as cofactor.

The enzyme catalyses L-kynurenine + NADPH + O2 + H(+) = 3-hydroxy-L-kynurenine + NADP(+) + H2O. It functions in the pathway cofactor biosynthesis; NAD(+) biosynthesis; quinolinate from L-kynurenine: step 1/3. Catalyzes the hydroxylation of L-kynurenine (L-Kyn) to form 3-hydroxy-L-kynurenine (L-3OHKyn). Required for synthesis of quinolinic acid. This chain is Kynurenine 3-monooxygenase, found in Legionella pneumophila (strain Lens).